The sequence spans 275 residues: N-acetyltransferase YodP (275 aa).

The N-acetyltransferase domain occupies 125–271 (FTMRKAETND…AEGLENMNIW (147 aa)).

The protein belongs to the acetyltransferase family.

The enzyme catalyses (3S)-3,6-diaminohexanoate + acetyl-CoA = (3S)-6-acetamido-3-aminohexanoate + CoA + H(+). In vitro, is able to catalyze the acetylation of beta-lysine to N6-acetyl-beta-lysine, an archaeal osmolyte produced by methanogenic archaea. Its physiological function has not yet been elucidated. In Bacillus subtilis (strain 168), this protein is N-acetyltransferase YodP (yodP).